Reading from the N-terminus, the 194-residue chain is Granulocyte colony-stimulating factor (194 aa).

A signal peptide spans 1–20; the sequence is KLMALQLLLWHSALWMVQEA. Disulfide bonds link cysteine 56-cysteine 62 and cysteine 84-cysteine 94. Residue threonine 153 is glycosylated (O-linked (GalNAc...) threonine).

It belongs to the IL-6 superfamily. As to quaternary structure, monomer. In terms of processing, O-glycosylated.

The protein resides in the secreted. Its function is as follows. Granulocyte/macrophage colony-stimulating factors are cytokines that act in hematopoiesis by controlling the production, differentiation, and function of 2 related white cell populations of the blood, the granulocytes and the monocytes-macrophages. This CSF induces granulocytes. This chain is Granulocyte colony-stimulating factor (CSF3), found in Felis catus (Cat).